A 114-amino-acid chain; its full sequence is TYRO protein tyrosine kinase-binding protein (114 aa).

Positions methionine 1 to glycine 21 are cleaved as a signal peptide. Topologically, residues leucine 22–proline 42 are extracellular. The helical transmembrane segment at glycine 43–valine 63 threads the bilayer. Aspartate 52 lines the Ca(2+) pocket. The Cytoplasmic segment spans residues tyrosine 64–arginine 114. Residues glutamine 74 to asparagine 107 form a disordered region. Residues arginine 81 to glutamine 109 enclose the ITAM domain. A phosphotyrosine mark is found at tyrosine 92 and tyrosine 103.

It belongs to the TYROBP family. In terms of assembly, homodimer; disulfide-linked. Homotrimer; disulfide-linked. Homotetramer; disulfide-linked. Homotrimers and homotetramers form when low levels of partner receptors are available and are competitive with assembly with interacting receptors. They may represent alternative oligomerization states or may be intermediates in the receptor assembly process. Binding of a metal cation aids in homooligomerization through coordination of the metal ion by the subunits of the oligomer. Interacts with TREM1. Interacts with TREM2. Interacts with TREM3. Interacts with CLECSF5. Interacts with CD300LB and CD300C2. Interacts with CD300E. Interacts (via ITAM domain) with SYK (via SH2 domains); activates SYK mediating neutrophil and macrophage integrin-mediated activation. Interacts (via transmembrane domain) with KLRK1 isoform 2 (via transmembrane domain); the interaction is required for KLRK1 NK cell surface expression and NK cell-mediated cytotoxicity. Interacts with KLRC2. Interacts with CD300H. Interacts with KLRD1. Interacts with KLRA4 and KLRA8. Post-translationally, tyrosine phosphorylated. Following ligand binding by associated receptors, tyrosine phosphorylated in the ITAM domain which leads to activation of additional tyrosine kinases and subsequent cell activation. As to expression, expressed on microglia (at protein level). Expressed on oligodendrocytes (at protein level). Expressed on macrophages and osteoclasts. Expressed on dendritic cells in liver, spleen, kidney and lung with highest levels in liver dendritic cells.

The protein resides in the cell membrane. Adapter protein which non-covalently associates with activating receptors found on the surface of a variety of immune cells to mediate signaling and cell activation following ligand binding by the receptors. TYROBP is tyrosine-phosphorylated in the ITAM domain following ligand binding by the associated receptors which leads to activation of additional tyrosine kinases and subsequent cell activation. Also has an inhibitory role in some cells. Non-covalently associates with activating receptors of the CD300 family to mediate cell activation. Also mediates cell activation through association with activating receptors of the CD200R family. Required for neutrophil activation mediated by integrin. Required for the activation of myeloid cells mediated by the CLEC5A/MDL1 receptor. Associates with natural killer (NK) cell receptors such as the KLRD1/KLRC2 heterodimer to mediate NK cell activation. Also associates non-covalently with the NK cell receptors KLRA4/LY49D and KLRA8/LY49H which leads to NK cell activation. Associates with TREM1 to mediate activation of neutrophils and monocytes. Associates with TREM2 on monocyte-derived dendritic cells to mediate up-regulation of chemokine receptor CCR7 and dendritic cell maturation and survival. Association with TREM2 mediates cytokine-induced formation of multinucleated giant cells which are formed by the fusion of macrophages. Stabilizes the TREM2 C-terminal fragment (TREM2-CTF) which is produced by TREM2 ectodomain shedding. In microglia, required with TREM2 for phagocytosis of apoptotic neurons. Required with ITGAM/CD11B in microglia to control production of microglial superoxide ions which promote the neuronal apoptosis that occurs during brain development. Promotes pro-inflammatory responses in microglia following nerve injury which accelerates degeneration of injured neurons. Positively regulates the expression of the IRAK3/IRAK-M kinase and IL10 production by liver dendritic cells and inhibits their T cell allostimulatory ability. Negatively regulates B cell proliferation. Required for CSF1-mediated osteoclast cytoskeletal organization. Positively regulates multinucleation during osteoclast development. The protein is TYRO protein tyrosine kinase-binding protein of Mus musculus (Mouse).